The chain runs to 337 residues: MSKSLRVGVVGAGAMGADHIDRINNRTSGAHISAIIEPDAARAAAAAEDAPGAQAFTRIEDAIAADAVDAVLIAVPGQFHEPVLVPALEAGLPILCEKPLTPDSESSLRIVELEQKLDKPHIQVGFMRRFDPEYNNLRKLVESGEAGELLMLRGLHRNPSVGESYTQSMLITDSVVHEFDVIPWLAGSRVVSVEVKYPKTSSLAHSGLKEPILVIMELENGVLVDVEMNVNIQFGYQVATEAVFEKGLARIGQPSGMQRWRDGEFLINEHTDFTTRFATAYDRQIQSWVDAVHEGTLVAGPNAWDGYLVALSCEAGVKALDGGVIPVDAAPRPDFYA.

It belongs to the Gfo/Idh/MocA family. In terms of assembly, homotetramer.

The enzyme catalyses myo-inositol + NAD(+) = scyllo-inosose + NADH + H(+). Involved in the oxidation of myo-inositol (MI) to 2-keto-myo-inositol (2KMI or 2-inosose). The protein is Inositol 2-dehydrogenase of Corynebacterium glutamicum (strain ATCC 13032 / DSM 20300 / JCM 1318 / BCRC 11384 / CCUG 27702 / LMG 3730 / NBRC 12168 / NCIMB 10025 / NRRL B-2784 / 534).